The primary structure comprises 115 residues: Cytochrome c (115 aa).

Residues Cys-26, Cys-29, His-30, and Met-91 each contribute to the heme c site.

This sequence belongs to the cytochrome c family. Post-translationally, binds 1 heme c group covalently per subunit.

Its subcellular location is the mitochondrion intermembrane space. In terms of biological role, electron carrier protein. The oxidized form of the cytochrome c heme group can accept an electron from the heme group of the cytochrome c1 subunit of cytochrome reductase. Cytochrome c then transfers this electron to the cytochrome oxidase complex, the final protein carrier in the mitochondrial electron-transport chain. The chain is Cytochrome c from Theileria annulata.